Reading from the N-terminus, the 239-residue chain is Lipoprotein-releasing system ATP-binding protein LolD (239 aa).

The 231-residue stretch at 9-239 (LQVQHVSKHY…AATSPTGLAE (231 aa)) folds into the ABC transporter domain. 45–52 (GSSGSGKS) is a binding site for ATP.

The protein belongs to the ABC transporter superfamily. Lipoprotein translocase (TC 3.A.1.125) family. The complex is composed of two ATP-binding proteins (LolD) and two transmembrane proteins (LolC and LolE).

It is found in the cell inner membrane. Part of the ABC transporter complex LolCDE involved in the translocation of mature outer membrane-directed lipoproteins, from the inner membrane to the periplasmic chaperone, LolA. Responsible for the formation of the LolA-lipoprotein complex in an ATP-dependent manner. This is Lipoprotein-releasing system ATP-binding protein LolD from Shewanella frigidimarina (strain NCIMB 400).